We begin with the raw amino-acid sequence, 339 residues long: Ketol-acid reductoisomerase (NADP(+)) (339 aa).

The region spanning 1-182 (MRVYYDCDVN…GGGRSGIMKT (182 aa)) is the KARI N-terminal Rossmann domain. Residues 24 to 27 (YGAQ), Ser-51, Thr-53, and 83 to 86 (DELQ) contribute to the NADP(+) site. His-108 is a catalytic residue. Gly-134 serves as a coordination point for NADP(+). The region spanning 183–328 (TFREECETDL…DKIRSMMALT (146 aa)) is the KARI C-terminal knotted domain. The Mg(2+) site is built by Asp-191, Glu-195, Glu-227, and Glu-231. Ser-252 serves as a coordination point for substrate.

It belongs to the ketol-acid reductoisomerase family. Mg(2+) is required as a cofactor.

The enzyme catalyses (2R)-2,3-dihydroxy-3-methylbutanoate + NADP(+) = (2S)-2-acetolactate + NADPH + H(+). It catalyses the reaction (2R,3R)-2,3-dihydroxy-3-methylpentanoate + NADP(+) = (S)-2-ethyl-2-hydroxy-3-oxobutanoate + NADPH + H(+). It functions in the pathway amino-acid biosynthesis; L-isoleucine biosynthesis; L-isoleucine from 2-oxobutanoate: step 2/4. It participates in amino-acid biosynthesis; L-valine biosynthesis; L-valine from pyruvate: step 2/4. Its function is as follows. Involved in the biosynthesis of branched-chain amino acids (BCAA). Catalyzes an alkyl-migration followed by a ketol-acid reduction of (S)-2-acetolactate (S2AL) to yield (R)-2,3-dihydroxy-isovalerate. In the isomerase reaction, S2AL is rearranged via a Mg-dependent methyl migration to produce 3-hydroxy-3-methyl-2-ketobutyrate (HMKB). In the reductase reaction, this 2-ketoacid undergoes a metal-dependent reduction by NADPH to yield (R)-2,3-dihydroxy-isovalerate. The polypeptide is Ketol-acid reductoisomerase (NADP(+)) (Bartonella bacilliformis (strain ATCC 35685 / KC583 / Herrer 020/F12,63)).